A 526-amino-acid polypeptide reads, in one-letter code: Glucose-6-phosphate isomerase (526 aa).

Glutamate 320 serves as the catalytic Proton donor. Active-site residues include histidine 349 and lysine 453.

It belongs to the GPI family.

It is found in the cytoplasm. The catalysed reaction is alpha-D-glucose 6-phosphate = beta-D-fructose 6-phosphate. The protein operates within carbohydrate biosynthesis; gluconeogenesis. It participates in carbohydrate degradation; glycolysis; D-glyceraldehyde 3-phosphate and glycerone phosphate from D-glucose: step 2/4. Functionally, catalyzes the reversible isomerization of glucose-6-phosphate to fructose-6-phosphate. The polypeptide is Glucose-6-phosphate isomerase (Gloeothece citriformis (strain PCC 7424) (Cyanothece sp. (strain PCC 7424))).